The sequence spans 166 residues: Putative 4-hydroxy-4-methyl-2-oxoglutarate aldolase (166 aa).

Residues Gly81–Ile84 and Arg103 contribute to the substrate site. Asp104 contacts a divalent metal cation.

It belongs to the class II aldolase/RraA-like family. In terms of assembly, homotrimer. A divalent metal cation is required as a cofactor.

It catalyses the reaction 4-hydroxy-4-methyl-2-oxoglutarate = 2 pyruvate. It carries out the reaction oxaloacetate + H(+) = pyruvate + CO2. Its function is as follows. Catalyzes the aldol cleavage of 4-hydroxy-4-methyl-2-oxoglutarate (HMG) into 2 molecules of pyruvate. Also contains a secondary oxaloacetate (OAA) decarboxylase activity due to the common pyruvate enolate transition state formed following C-C bond cleavage in the retro-aldol and decarboxylation reactions. This chain is Putative 4-hydroxy-4-methyl-2-oxoglutarate aldolase, found in Corynebacterium glutamicum (strain ATCC 13032 / DSM 20300 / JCM 1318 / BCRC 11384 / CCUG 27702 / LMG 3730 / NBRC 12168 / NCIMB 10025 / NRRL B-2784 / 534).